Consider the following 125-residue polypeptide: Small ribosomal subunit protein bS6 (125 aa).

Positions 99-125 are disordered; sequence ASPMVKAREERKPLTEVENNDFEDAEE. Residues 104–113 show a composition bias toward basic and acidic residues; sequence KAREERKPLT. Residues 116–125 show a composition bias toward acidic residues; it reads ENNDFEDAEE.

This sequence belongs to the bacterial ribosomal protein bS6 family.

In terms of biological role, binds together with bS18 to 16S ribosomal RNA. The chain is Small ribosomal subunit protein bS6 from Histophilus somni (strain 2336) (Haemophilus somnus).